The primary structure comprises 354 residues: Membrane progestin receptor alpha-B (354 aa).

The Cytoplasmic portion of the chain corresponds to 1–76 (MATVVMEQIG…LTLFQRHNES (76 aa)). The chain crosses the membrane as a helical span at residues 77–97 (VNVWTHLLASLIILVKFQELS). At 98–110 (ETVDFLRDPHAQP) the chain is on the extracellular side. A helical membrane pass occupies residues 111–131 (MFILLLAAFTYLGCSALAHLL). The Cytoplasmic portion of the chain corresponds to 132–141 (SAKSEISHYT). The chain crosses the membrane as a helical span at residues 142 to 162 (FYFLDYVGVAVYQYGSALAHF). The Extracellular portion of the chain corresponds to 163 to 175 (YYVVEEEWHAQVR). A helical membrane pass occupies residues 176–196 (TFFLPASAFLAWLSCTGCCYG). Over 197-244 (KYASPKLPKFVHKLFQVVPSGLAYCLDISPVLHRIYRCYSSEHWCADQ) the chain is Cytoplasmic. A helical transmembrane segment spans residues 245–265 (AVVYHCYQVLFFLISAYFFSY). The Extracellular portion of the chain corresponds to 266–277 (PHPERWFPGRCD). The helical transmembrane segment at 278–298 (FIGQGHQIFHVFLVLCTLVQI) threads the bilayer. Topologically, residues 299–318 (EAVRLDYTERRRLYEHLHGD) are cytoplasmic. A helical membrane pass occupies residues 319 to 339 (LAHDAVALFIFTACCSALTAF). Over 340–354 (YVRKRVKTYLEEKQE) the chain is Extracellular.

The protein belongs to the ADIPOR family.

The protein resides in the cell membrane. Steroid membrane receptor. Signals upon progestin binding, resulting in rapid activation of MAPK and down-regulation of adenylyl cyclase activity. Interacts with steroids with varying degrees of affinity, showing specificity for activation by the maturation-inducing steroid (MIS) 4-pregnen-17,20beta-diol-3-one (17,20beta-DHP). Capable of mediating progestin-induced oocyte maturation. This Danio rerio (Zebrafish) protein is Membrane progestin receptor alpha-B (paqr7b).